Reading from the N-terminus, the 250-residue chain is MAMSKIVSLTGLLASASLVAGHGYVSGVVIDGQYYGGYLVDKYAYSDNAPDTIGWTTSATDLGFVDGTGYQSPDIICHKDGAPGALTAEVAAGGKIELQWTEWPESHHGPVLNYLAPCGGECSAVDKTTLEFFKIEAKGLIDGTTPPGQWATDDLISNNNSYTVTIPTSIQEGNYVLRHEIIGLHSAGQKDGAQNYPQCINIKVTGGGDATPAGTAGEALYKDTDAGILFDIYSDLSGGYPIPGPEVFSA.

Residues 1-21 form the signal peptide; the sequence is MAMSKIVSLTGLLASASLVAG. Residues histidine 22 and histidine 107 each contribute to the Cu(2+) site. 2 cysteine pairs are disulfide-bonded: cysteine 77-cysteine 199 and cysteine 118-cysteine 122. The N-linked (GlcNAc...) asparagine glycan is linked to asparagine 159. Residues histidine 185 and glutamine 194 each contribute to the O2 site. Cu(2+) is bound at residue tyrosine 196.

Belongs to the polysaccharide monooxygenase AA9 family. Cu(2+) serves as cofactor.

Its subcellular location is the secreted. Its function is as follows. Lytic polysaccharide monooxygenase (LPMO) that exhibits oxidative cleavage beta-O-4 linkage of lignin resulting in the formation of aromatic compound guaiacol. Catalysis by LPMOs requires the reduction of the active-site copper from Cu(II) to Cu(I) by a reducing agent and H(2)O(2) or O(2) as a cosubstrate. Does not use cellulose, cello-oligosaccharides, xyloglucan, xylan, chitin nor starch as substrates. Able to depolymerize the lignin dimer guaicyl glycerol beta-guaicyl ether (GGE). This is AA9 family lytic polysaccharide monooxygenase AA17 from Aspergillus oryzae (strain ATCC 42149 / RIB 40) (Yellow koji mold).